Reading from the N-terminus, the 331-residue chain is Aromatic 2-oxoacid reductase (331 aa).

NAD(+)-binding positions include Arg154–Ile155, Asp175, Ala205–Pro206, Asn211, Ala232–Arg234, and Asp258. Arg234 is an active-site residue. The active site involves Glu263. The Proton donor role is filled by His295.

The protein belongs to the D-isomer specific 2-hydroxyacid dehydrogenase family.

The catalysed reaction is (R)-3-phenyllactate + NAD(+) = 3-phenylpyruvate + NADH + H(+). The enzyme catalyses (2R)-2-hydroxy-3-(4-hydroxyphenyl)propanoate + NAD(+) = 3-(4-hydroxyphenyl)pyruvate + NADH + H(+). It catalyses the reaction 3-(indol-3-yl)lactate + NAD(+) = indole-3-pyruvate + NADH + H(+). Its pathway is amino-acid degradation. Essential for the reductive metabolism of L-phenylalanine, L-tyrosine and L-tryptophan. Catalyzes the conversion of phenylpyruvic acid to phenyllactic acid, 4-hydroxy-phenylpyruvic acid to 4-hydroxy-phenyllactic acid, and indolepyruvic acid to indolelactic acid. This is Aromatic 2-oxoacid reductase from Clostridium sporogenes (strain ATCC 7955 / DSM 767 / NBRC 16411 / NCIMB 8053 / NCTC 8594 / PA 3679).